Consider the following 751-residue polypeptide: Probable alpha-galactosidase C (751 aa).

The N-terminal stretch at 1–27 (MFGSPKRAALAAASLLAVFGNGPSVMA) is a signal peptide. Residues N49, N57, N162, N186, N194, N366, N433, N452, and N500 are each glycosylated (N-linked (GlcNAc...) asparagine). Catalysis depends on D510, which acts as the Nucleophile. D572 (proton donor) is an active-site residue. N720 carries an N-linked (GlcNAc...) asparagine glycan.

This sequence belongs to the glycosyl hydrolase 36 family. In terms of assembly, homotetramer. Requires Mg(2+) as cofactor. NAD(+) serves as cofactor.

It is found in the secreted. It catalyses the reaction Hydrolysis of terminal, non-reducing alpha-D-galactose residues in alpha-D-galactosides, including galactose oligosaccharides, galactomannans and galactolipids.. Functionally, hydrolyzes a variety of simple alpha-D-galactoside as well as more complex molecules such as oligosaccharides and polysaccharides. This Aspergillus oryzae (strain ATCC 42149 / RIB 40) (Yellow koji mold) protein is Probable alpha-galactosidase C (aglC).